The chain runs to 123 residues: UPF0738 protein Bcer98_0913 (123 aa).

It belongs to the UPF0738 family.

This Bacillus cytotoxicus (strain DSM 22905 / CIP 110041 / 391-98 / NVH 391-98) protein is UPF0738 protein Bcer98_0913.